The sequence spans 945 residues: Isoleucine--tRNA ligase (945 aa).

The 'HIGH' region motif lies at proline 66–histidine 76. Glutamate 581 contributes to the L-isoleucyl-5'-AMP binding site. The 'KMSKS' region signature appears at lysine 622–serine 626. Residue lysine 625 participates in ATP binding. The Zn(2+) site is built by cysteine 908, cysteine 911, cysteine 928, and cysteine 931.

It belongs to the class-I aminoacyl-tRNA synthetase family. IleS type 1 subfamily. Monomer. The cofactor is Zn(2+).

Its subcellular location is the cytoplasm. The catalysed reaction is tRNA(Ile) + L-isoleucine + ATP = L-isoleucyl-tRNA(Ile) + AMP + diphosphate. Functionally, catalyzes the attachment of isoleucine to tRNA(Ile). As IleRS can inadvertently accommodate and process structurally similar amino acids such as valine, to avoid such errors it has two additional distinct tRNA(Ile)-dependent editing activities. One activity is designated as 'pretransfer' editing and involves the hydrolysis of activated Val-AMP. The other activity is designated 'posttransfer' editing and involves deacylation of mischarged Val-tRNA(Ile). This chain is Isoleucine--tRNA ligase, found in Paraburkholderia phytofirmans (strain DSM 17436 / LMG 22146 / PsJN) (Burkholderia phytofirmans).